We begin with the raw amino-acid sequence, 227 residues long: Large ribosomal subunit protein uL3 (227 aa).

This sequence belongs to the universal ribosomal protein uL3 family. In terms of assembly, part of the 50S ribosomal subunit. Forms a cluster with proteins L14 and L19.

One of the primary rRNA binding proteins, it binds directly near the 3'-end of the 23S rRNA, where it nucleates assembly of the 50S subunit. The chain is Large ribosomal subunit protein uL3 from Leuconostoc citreum (strain KM20).